Here is a 631-residue protein sequence, read N- to C-terminus: tRNA uridine 5-carboxymethylaminomethyl modification enzyme MnmG (631 aa).

15–20 (GAGHAG) contacts FAD. The segment at 214–233 (YSKTEEEPGDKEPRHFSFTS) is disordered. An NAD(+)-binding site is contributed by 276–290 (GPRYCPSIETKVVRF).

The protein belongs to the MnmG family. Homodimer. Heterotetramer of two MnmE and two MnmG subunits. The cofactor is FAD.

The protein localises to the cytoplasm. Functionally, NAD-binding protein involved in the addition of a carboxymethylaminomethyl (cmnm) group at the wobble position (U34) of certain tRNAs, forming tRNA-cmnm(5)s(2)U34. The polypeptide is tRNA uridine 5-carboxymethylaminomethyl modification enzyme MnmG (Lactobacillus delbrueckii subsp. bulgaricus (strain ATCC BAA-365 / Lb-18)).